The chain runs to 425 residues: Glutamyl-tRNA reductase (425 aa).

Residues 49-52 (TCNR), S107, 112-114 (EPQ), and Q118 each bind substrate. The active-site Nucleophile is the C50. Residue 187–192 (GAGETI) participates in NADP(+) binding.

Belongs to the glutamyl-tRNA reductase family. In terms of assembly, homodimer.

The enzyme catalyses (S)-4-amino-5-oxopentanoate + tRNA(Glu) + NADP(+) = L-glutamyl-tRNA(Glu) + NADPH + H(+). It participates in porphyrin-containing compound metabolism; protoporphyrin-IX biosynthesis; 5-aminolevulinate from L-glutamyl-tRNA(Glu): step 1/2. Functionally, catalyzes the NADPH-dependent reduction of glutamyl-tRNA(Glu) to glutamate 1-semialdehyde (GSA). This Pseudomonas putida (strain W619) protein is Glutamyl-tRNA reductase.